Here is a 427-residue protein sequence, read N- to C-terminus: Peptidase B (427 aa).

The Mn(2+) site is built by Lys195 and Asp200. Lys207 is an active-site residue. The Mn(2+) site is built by Asp218, Asp277, and Glu279. The active site involves Arg281.

This sequence belongs to the peptidase M17 family. Homohexamer. It depends on Mn(2+) as a cofactor.

The protein resides in the cytoplasm. It carries out the reaction Release of an N-terminal amino acid, Xaa, from a peptide or arylamide. Xaa is preferably Glu or Asp but may be other amino acids, including Leu, Met, His, Cys and Gln.. Its function is as follows. Probably plays an important role in intracellular peptide degradation. The sequence is that of Peptidase B from Escherichia coli (strain ATCC 8739 / DSM 1576 / NBRC 3972 / NCIMB 8545 / WDCM 00012 / Crooks).